Reading from the N-terminus, the 449-residue chain is D-inositol 3-phosphate glycosyltransferase (449 aa).

Residue H43 participates in 1D-myo-inositol 3-phosphate binding. UDP-N-acetyl-alpha-D-glucosamine contacts are provided by residues 49 to 50 and G57; that span reads QP. 1D-myo-inositol 3-phosphate contacts are provided by residues 54–59, K112, Y145, T169, and R189; that span reads DAGGMN. R263, K268, and Q324 together coordinate UDP-N-acetyl-alpha-D-glucosamine. 3 residues coordinate Mg(2+): Y333, R334, and A336. UDP-N-acetyl-alpha-D-glucosamine contacts are provided by E346 and E354. T360 contacts Mg(2+).

This sequence belongs to the glycosyltransferase group 1 family. MshA subfamily. Homodimer.

It catalyses the reaction 1D-myo-inositol 3-phosphate + UDP-N-acetyl-alpha-D-glucosamine = 1D-myo-inositol 2-acetamido-2-deoxy-alpha-D-glucopyranoside 3-phosphate + UDP + H(+). Catalyzes the transfer of a N-acetyl-glucosamine moiety to 1D-myo-inositol 3-phosphate to produce 1D-myo-inositol 2-acetamido-2-deoxy-glucopyranoside 3-phosphate in the mycothiol biosynthesis pathway. The polypeptide is D-inositol 3-phosphate glycosyltransferase (Segniliparus rotundus (strain ATCC BAA-972 / CDC 1076 / CIP 108378 / DSM 44985 / JCM 13578)).